Here is a 534-residue protein sequence, read N- to C-terminus: MMDDDTELRTDGNSLLKAVWLGRLRLTRLLLEGGAYINESNDKGETALMVACITKHVDQQSISKSKMVKYLLDNRADPNIQDKSGKTALIHACIRRAGGEVVSLLLENGADPSLEDRTGASALVYAINADDKDALKHLLDACKAKGKEVIIITTDKSSSGTKTTKQYLNVPPSPKVEDRQSPPLCTTPSDVELKTSGLASPPSEKDDDFFILQTGHQSGCSTSKVLNEPGSPTRKVSSLKRARLPQLKRLQSEPWGLIAPSVLAAATRQDETHGTSTDNEVIRSINDVTFPKRGPLSRTNSIDSKDPTLFPTVQEQVLKVSASTPASWKAAYEKGQAPHPRLARRGTLPLDQEKSGMCPPGPSTLKDPASLKLLENDLYDLDIQPVGDPPNSMSLESGKGPLDRKKLNSSHLSLFHGSRESLEVVPSTSPTSVRRRPPHLLERRGSGTLLLDRIAHTRPGFLPPLNVNLNPPIPDIRASSKPASPLASGLKSMAPVAPNSPKRVDLRSKKKLLRRHSMQIEQMKQLSDFEEIMA.

ANK repeat units follow at residues 10-39 (TDGN…YINE), 43-80 (KGET…DPNI), 84-114 (SGKT…DPSL), and 118-147 (TGAS…AKGK). Residues 159–205 (SGTKTTKQYLNVPPSPKVEDRQSPPLCTTPSDVELKTSGLASPPSEK) form a disordered region. Serine 301 carries the phosphoserine modification. Disordered regions lie at residues 332-368 (YEKG…LKDP) and 384-403 (QPVG…GPLD). Residue serine 446 is modified to Phosphoserine. The segment at 480 to 503 (SKPASPLASGLKSMAPVAPNSPKR) is disordered.

It belongs to the ANKRD34 family.

The sequence is that of Ankyrin repeat domain-containing protein 34C (Ankrd34c) from Mus musculus (Mouse).